The chain runs to 607 residues: Replication factor C large subunit (607 aa).

G55 to T62 contributes to the ATP binding site. The disordered stretch occupies residues E468–F607. The segment covering T506–N518 has biased composition (basic and acidic residues). A compositionally biased stretch (polar residues) spans S548–K558.

Belongs to the activator 1 small subunits family. RfcL subfamily. Heteromultimer composed of small subunits (RfcS) and large subunits (RfcL).

In terms of biological role, part of the RFC clamp loader complex which loads the PCNA sliding clamp onto DNA. This is Replication factor C large subunit from Methanosarcina acetivorans (strain ATCC 35395 / DSM 2834 / JCM 12185 / C2A).